The following is an 884-amino-acid chain: Probable ribonuclease ZC3H12C (884 aa).

Residues 66–108 form a disordered region; the sequence is KPTMDTVNSGKEGKGVSEENVSSGDSEGSTSSDHESEQLSSLS. Low complexity predominate over residues 87–96; it reads SSGDSEGSTS. Ser231 bears the Phosphoserine mark. Residues 246–401 form the RNase NYN domain; it reads LRPVVIDGSN…LGRHGPSLDN (156 aa). The C3H1-type zinc finger occupies 411 to 436; that stretch reads EHKKQPCPYGKKCTYGHKCKYYHPER. Over residues 456–478 the composition is skewed to polar residues; it reads AAKTTNEGGLVKSNSVPCSTKAD. Disordered regions lie at residues 456 to 548, 716 to 739, and 755 to 776; these read AAKT…SGVH, VGARSSCPGDYPSPPSSAHSKAPH, and SRLYDSSPSRQRKPYSRQEGLG. The span at 500–516 shows a compositional bias: basic and acidic residues; the sequence is VYQDIEEKLPTKNKLET. Polar residues predominate over residues 518 to 543; it reads SVPSLVSIPATSTAKPQSTTPLSNGL.

It belongs to the ZC3H12 family. The cofactor is Mg(2+).

In terms of biological role, may function as RNase and regulate the levels of target RNA species. This Mus musculus (Mouse) protein is Probable ribonuclease ZC3H12C (Zc3h12c).